Consider the following 276-residue polypeptide: NH(3)-dependent NAD(+) synthetase (276 aa).

Residue 43-50 (GISGGVDS) coordinates ATP. Asp49 is a Mg(2+) binding site. Arg146 provides a ligand contact to deamido-NAD(+). Thr166 contacts ATP. Residue Glu171 coordinates Mg(2+). Residues Lys179 and Asp186 each coordinate deamido-NAD(+). ATP-binding residues include Lys195 and Thr217. 266-267 (HK) contacts deamido-NAD(+).

The protein belongs to the NAD synthetase family. In terms of assembly, homodimer.

It carries out the reaction deamido-NAD(+) + NH4(+) + ATP = AMP + diphosphate + NAD(+) + H(+). Its pathway is cofactor biosynthesis; NAD(+) biosynthesis; NAD(+) from deamido-NAD(+) (ammonia route): step 1/1. Catalyzes the ATP-dependent amidation of deamido-NAD to form NAD. Uses ammonia as a nitrogen source. In Shewanella halifaxensis (strain HAW-EB4), this protein is NH(3)-dependent NAD(+) synthetase.